The primary structure comprises 66 residues: Large ribosomal subunit protein bL35 (66 aa).

Positions 1–16 (MPKQKTHRASAKRFKR) are enriched in basic residues. The tract at residues 1 to 21 (MPKQKTHRASAKRFKRTGSGG) is disordered.

The protein belongs to the bacterial ribosomal protein bL35 family.

In Streptococcus gordonii (strain Challis / ATCC 35105 / BCRC 15272 / CH1 / DL1 / V288), this protein is Large ribosomal subunit protein bL35.